The chain runs to 412 residues: Palmitoyltransferase ZDHHC6 (412 aa).

Over 1–24 the chain is Cytoplasmic; that stretch reads MNILSAIIVFENLHEVKRLFHWGP. Residues 25–45 form a helical membrane-spanning segment; that stretch reads IIALTVIGVCSSMAILDSIIW. Over 46–57 the chain is Lumenal; it reads YWPLDTTGGSIN. Residues 58–78 form a helical membrane-spanning segment; that stretch reads FIMLINWTVLILYNYFNAMFV. At 79 to 143 the chain is on the cytoplasmic side; that stretch reads GPGYIPLEWK…NCCGHLNHAY (65 aa). The region spanning 99–149 is the DHHC domain; the sequence is QFCRLCQGYKAPRSHHCRKCNRCVMKMDHHCPWINNCCGHLNHAYFTSFLL. Catalysis depends on Cys-129, which acts as the S-palmitoyl cysteine intermediate. A helical membrane pass occupies residues 144-164; sequence FTSFLLLAPLGCIHAALIFIM. Over 165–205 the chain is Lumenal; the sequence is TMYTQLYDRISFGWSSVKIDMSAARHIHHPIMPFSIAAFAA. The chain crosses the membrane as a helical span at residues 206-226; the sequence is TLFALGLALGTTIAVGMLFFI. Residues 227-412 lie on the Cytoplasmic side of the membrane; sequence QMKVILRNRT…NSTSEEKKEQ (186 aa). The SH3 domain occupies 313 to 398; it reads QRSVEYRVVE…PRRCVEKCLY (86 aa). 3 S-palmitoyl cysteine lipidation sites follow: Cys-328, Cys-329, and Cys-343. The Di-lysine motif motif lies at 409–412; sequence KKEQ.

The protein belongs to the DHHC palmitoyltransferase family.

It localises to the endoplasmic reticulum membrane. The catalysed reaction is L-cysteinyl-[protein] + hexadecanoyl-CoA = S-hexadecanoyl-L-cysteinyl-[protein] + CoA. The enzyme catalyses L-cysteinyl-[protein] + octadecanoyl-CoA = S-octadecanoyl-L-cysteinyl-[protein] + CoA. In terms of biological role, endoplasmic reticulum palmitoyl acyltransferase that probably catalyzes the addition of palmitate onto various protein substrates and is involved in a variety of cellular processes. Could also function as a stearoyltransferase. The sequence is that of Palmitoyltransferase ZDHHC6 from Danio rerio (Zebrafish).